The chain runs to 477 residues: Myosin-binding protein H (477 aa).

Residues 1-73 (MMEKNTSEGP…APPSEDVPSA (73 aa)) form a disordered region. Phosphothreonine is present on residues Thr6 and Thr26. The Fibronectin type-III 1 domain occupies 73 to 168 (APLLLTLDDV…LDQPIHIREN (96 aa)). Residues 172–260 (PKIRVPRHLR…EDLEAKAVID (89 aa)) form the Ig-like C2-type 1 domain. Residues 269 to 364 (PPSSIRLLDV…TKELAHIQKA (96 aa)) form the Fibronectin type-III 2 domain. The region spanning 382-466 (PSFTQPLADH…INVLGEASVD (85 aa)) is the Ig-like C2-type 2 domain.

The protein belongs to the immunoglobulin superfamily. MyBP family. Mainly expressed in the skeletal muscle. Slightly expressed in the left atrium and arteria mammaria interna.

In terms of biological role, binds to myosin; probably involved in interaction with thick myofilaments in the A-band. In Homo sapiens (Human), this protein is Myosin-binding protein H (MYBPH).